Here is a 418-residue protein sequence, read N- to C-terminus: LL-diaminopimelate aminotransferase (418 aa).

2 residues coordinate substrate: tyrosine 25 and glycine 52. Pyridoxal 5'-phosphate is bound by residues tyrosine 78, 115–116 (SK), tyrosine 140, asparagine 190, tyrosine 221, and 248–250 (SFS). The substrate site is built by lysine 116, tyrosine 140, and asparagine 190. Lysine 251 carries the N6-(pyridoxal phosphate)lysine modification. Arginine 259 lines the pyridoxal 5'-phosphate pocket.

This sequence belongs to the class-I pyridoxal-phosphate-dependent aminotransferase family. As to quaternary structure, homodimer. Pyridoxal 5'-phosphate is required as a cofactor.

Its subcellular location is the cytoplasm. The enzyme catalyses (2S,6S)-2,6-diaminopimelate + 2-oxoglutarate = (S)-2,3,4,5-tetrahydrodipicolinate + L-glutamate + H2O + H(+). The protein operates within amino-acid biosynthesis; L-lysine biosynthesis via DAP pathway; LL-2,6-diaminopimelate from (S)-tetrahydrodipicolinate (aminotransferase route): step 1/1. In terms of biological role, involved in the synthesis of meso-diaminopimelate (m-DAP or DL-DAP), required for both lysine and peptidoglycan biosynthesis. Catalyzes the direct conversion of tetrahydrodipicolinate to LL-diaminopimelate, a reaction that requires three enzymes in E.coli. The chain is LL-diaminopimelate aminotransferase (dapL) from Methanocaldococcus jannaschii (strain ATCC 43067 / DSM 2661 / JAL-1 / JCM 10045 / NBRC 100440) (Methanococcus jannaschii).